A 593-amino-acid polypeptide reads, in one-letter code: Thiol:disulfide interchange protein DsbD (593 aa).

The signal sequence occupies residues 1 to 21; that stretch reads MRALLTFFVAGLLVLSSPAMA. 2 cysteine pairs are disulfide-bonded: C130–C136 and C207–C328. Helical transmembrane passes span 193 to 215, 235 to 257, 269 to 291, 318 to 340, 347 to 369, 384 to 401, 408 to 425, and 440 to 462; these read LLFL…YPIL, LVYV…SAGL, LIGL…TLQL, GAIS…LLYV, LTGG…LVAV, RVKT…IFLL, MWST…FGWL, and SAVG…NYWF. The Thioredoxin domain maps to 451–593; that stretch reads FASAQPALNY…FLEHIQRISN (143 aa). C508 and C511 are oxidised to a cystine.

It belongs to the thioredoxin family. DsbD subfamily.

The protein localises to the cell inner membrane. It catalyses the reaction [protein]-dithiol + NAD(+) = [protein]-disulfide + NADH + H(+). The enzyme catalyses [protein]-dithiol + NADP(+) = [protein]-disulfide + NADPH + H(+). In terms of biological role, required to facilitate the formation of correct disulfide bonds in some periplasmic proteins and for the assembly of the periplasmic c-type cytochromes. Acts by transferring electrons from cytoplasmic thioredoxin to the periplasm. This transfer involves a cascade of disulfide bond formation and reduction steps. The protein is Thiol:disulfide interchange protein DsbD of Vibrio vulnificus (strain CMCP6).